We begin with the raw amino-acid sequence, 785 residues long: MPGVIPSESNGLSRGSPSKKNRLSLKFFQKKETKRALDFTDSQENEEKASEYRASEIDQVVPAAQSSPINCEKRENLLPFVGLNNLGNTCYLNSILQVLYFCPGFKSGVKHLFNIISRKKEALKDEANQKDKGNCKEDSLASYELICSLQSLIISVEQLQASFLLNPEKYTDELATQPRRLLNTLRELNPMYEGYLQHDAQEVLQCILGNIQETCQLLKKEEVKNVAELPTKVEEIPHPKEEMNGINSIEMDSMRHSEDFKEKLPKGNGKRKSDTEFGNMKKKVKLSKEHQSLEENQRQTRSKRKATSDTLESPPKIIPKYISENESPRPSQKKSRVKINWLKSATKQPSILSKFCSLGKITTNQGVKGQSKENECDPEEDLGKCESDNTTNGCGLESPGNTVTPVNVNEVKPINKGEEQIGFELVEKLFQGQLVLRTRCLECESLTERREDFQDISVPVQEDELSKVEESSEISPEPKTEMKTLRWAISQFASVERIVGEDKYFCENCHHYTEAERSLLFDKMPEVITIHLKCFAASGLEFDCYGGGLSKINTPLLTPLKLSLEEWSTKPTNDSYGLFAVVMHSGITISSGHYTASVKVTDLNSLELDKGNFVVDQMCEIGKPEPLNEEEARGVVENYNDEEVSIRVGGNTQPSKVLNKKNVEAIGLLGGQKSKADYELYNKASNPDKVASTAFAENRNSETSDTTGTHESDRNKESSDQTGINISGFENKISYVVQSLKEYEGKWLLFDDSEVKVTEEKDFLNSLSPSTSPTSTPYLLFYKKL.

Disordered regions lie at residues 1 to 21 (MPGV…SKKN) and 33 to 52 (TKRA…ASEY). A compositionally biased stretch (polar residues) spans 7 to 16 (SESNGLSRGS). A phosphoserine mark is found at Ser-16, Ser-42, and Ser-67. In terms of domain architecture, USP spans 81–785 (VGLNNLGNTC…TPYLLFYKKL (705 aa)). The Nucleophile role is filled by Cys-90. Basic and acidic residues-rich tracts occupy residues 258 to 275 (EDFK…KSDT) and 286 to 298 (LSKE…ENQR). A disordered region spans residues 258 to 336 (EDFKEKLPKG…SPRPSQKKSR (79 aa)). Phosphoserine is present on residues Ser-313 and Ser-475. His-593 functions as the Proton acceptor in the catalytic mechanism. The disordered stretch occupies residues 693 to 723 (TAFAENRNSETSDTTGTHESDRNKESSDQTG). Over residues 708 to 719 (GTHESDRNKESS) the composition is skewed to basic and acidic residues. Ser-768 is modified (phosphoserine).

Belongs to the peptidase C19 family. As to quaternary structure, interacts with FANCD2 and PCNA. Interacts with WDR48. Interacts with ATAD5; the interaction regulates USP1-mediated PCNA deubiquitination. Autocatalytic cleavage of USP1 following UV irradiation inactivates it, leading to an increase in ubiquitinated PCNA, recruitment of POLH and translesion synthesis. Post-translationally, ubiquitinated by the CRL2(KLHDC2) complex following autocatalytic cleavage, leading to its degradation: the CRL2(KLHDC2) complex recognizes the diglycine (Gly-Gly) at the C-terminus.

Its subcellular location is the nucleus. The enzyme catalyses Thiol-dependent hydrolysis of ester, thioester, amide, peptide and isopeptide bonds formed by the C-terminal Gly of ubiquitin (a 76-residue protein attached to proteins as an intracellular targeting signal).. In terms of biological role, negative regulator of DNA damage repair which specifically deubiquitinates monoubiquitinated FANCD2. Also involved in PCNA-mediated translesion synthesis (TLS) by deubiquitinating monoubiquitinated PCNA. Has almost no deubiquitinating activity by itself and requires the interaction with WDR48 to have a high activity. The polypeptide is Ubiquitin carboxyl-terminal hydrolase 1 (USP1) (Homo sapiens (Human)).